We begin with the raw amino-acid sequence, 118 residues long: MQSLRPEQTRGLLEPERTKTLLPRESRAWEKPPHPACTKDWEAVEVGASSHDSDEKDLSSQETGLSQEWSSVEEDDESEGSQGFVEWSKAPQQTTIVLVVCVLFLFLVLTGMPMMFHI.

Positions 1 to 84 (MQSLRPEQTR…DDESEGSQGF (84 aa)) are disordered. Positions 13-42 (LEPERTKTLLPRESRAWEKPPHPACTKDWE) are enriched in basic and acidic residues. The helical transmembrane segment at 96–116 (IVLVVCVLFLFLVLTGMPMMF) threads the bilayer.

Its subcellular location is the membrane. The sequence is that of Small integral membrane protein 17 (SMIM17) from Homo sapiens (Human).